We begin with the raw amino-acid sequence, 582 residues long: Heterogeneous nuclear ribonucleoprotein C homolog (582 aa).

A disordered region spans residues 1–21 (MSEALETGDPSPPPPIVSENG). 3 C2H2-type zinc fingers span residues 102-125 (YYCC…RGYH), 130-154 (SSCD…RRTH), and 213-235 (YACL…VEMH).

It localises to the nucleus. In Caenorhabditis elegans, this protein is Heterogeneous nuclear ribonucleoprotein C homolog.